The chain runs to 247 residues: Cell division protein ZapD (247 aa).

Belongs to the ZapD family. Interacts with FtsZ.

Its subcellular location is the cytoplasm. Functionally, cell division factor that enhances FtsZ-ring assembly. Directly interacts with FtsZ and promotes bundling of FtsZ protofilaments, with a reduction in FtsZ GTPase activity. In Salmonella choleraesuis (strain SC-B67), this protein is Cell division protein ZapD.